Reading from the N-terminus, the 173-residue chain is Alpha-crystallin A chain (173 aa).

Residue methionine 1 is modified to N-acetylmethionine. The required for complex formation with BFSP1 and BFSP2 stretch occupies residues 1 to 63 (MDIAIQHPWF…RTVLDSGVSE (63 aa)). Glutamine 6 carries the post-translational modification Deamidated glutamine; partial. Serine 45 carries the post-translational modification Phosphoserine. Glutamine 50 is subject to Deamidated glutamine; partial. Residues 52–162 (LFRTVLDSGV…GHSERAIPVS (111 aa)) form the sHSP domain. Lysine 70 carries the N6-acetyllysine modification. Histidine 79 contributes to the Zn(2+) binding site. Glutamine 90 bears the Deamidated glutamine; partial mark. An N6-acetyllysine modification is found at lysine 99. Histidine 100 contacts Zn(2+). At asparagine 101 the chain carries Deamidated asparagine; partial. Glutamate 102 and histidine 107 together coordinate Zn(2+). The residue at position 122 (serine 122) is a Phosphoserine. Deamidated asparagine; partial is present on asparagine 123. Positions 144 to 173 (PKVPSGVDAGHSERAIPVSREEKPSSAPTS) are disordered. Residues 153-167 (GHSERAIPVSREEKP) show a composition bias toward basic and acidic residues. Histidine 154 contacts Zn(2+). Serine 162 carries O-linked (GlcNAc) serine glycosylation.

This sequence belongs to the small heat shock protein (HSP20) family. In terms of assembly, heteromer composed of three CRYAA and one CRYAB subunits. Inter-subunit bridging via zinc ions enhances stability, which is crucial as there is no protein turn over in the lens. Can also form homodimers and homotetramers (dimers of dimers) which serve as the building blocks of homooligomers. Within homooligomers, the zinc-binding motif is created from residues of 3 different molecules. His-100 and Glu-102 from one molecule are ligands of the zinc ion, and His-107 and His-154 residues from additional molecules complete the site with tetrahedral coordination geometry. Part of a complex required for lens intermediate filament formation composed of BFSP1, BFSP2 and CRYAA. In terms of processing, acetylation at Lys-70 may increase chaperone activity. Undergoes age-dependent proteolytical cleavage at the C-terminus.

The protein localises to the cytoplasm. The protein resides in the nucleus. Functionally, contributes to the transparency and refractive index of the lens. Acts as a chaperone, preventing aggregation of various proteins under a wide range of stress conditions. Required for the correct formation of lens intermediate filaments as part of a complex composed of BFSP1, BFSP2 and CRYAA. In Sus scrofa (Pig), this protein is Alpha-crystallin A chain (CRYAA).